A 341-amino-acid chain; its full sequence is MSLAHSLKSFNSFGLAQSCADLVEAHSKEAVQAMCLPLWQQQLPMLVLGGGSNLVFTEDFNGTVVRVLSKGIKVSEDAEAFYLEVEAGENWHELIQFTLEHGMFGLENMALIPGTVGAAPIQNIGAYGVELCDVCDWVEYLDLPSGEFVRISTAECQFAYRESIFKDKLRNLAVVTAVGLRLVKRWQPRLAYGPLQSFDPATVTAREIFERVCQVRSEKLPDPAVLGNAGSFFKNPIVSAACYLDLAQRFPTIVGYAQADATVKLAAGWLIEQAGLKGFVLGNAAVHDKQALVLVNRGGATGRDICRLALHVIAQVQDKFGVVLEAEPRIMGANGEGDLYV.

The FAD-binding PCMH-type domain maps to 15 to 185; it reads LAQSCADLVE…TAVGLRLVKR (171 aa). The active site involves Arg161. The active-site Proton donor is the Ser231. Residue Glu327 is part of the active site.

This sequence belongs to the MurB family. FAD is required as a cofactor.

The protein resides in the cytoplasm. The catalysed reaction is UDP-N-acetyl-alpha-D-muramate + NADP(+) = UDP-N-acetyl-3-O-(1-carboxyvinyl)-alpha-D-glucosamine + NADPH + H(+). It participates in cell wall biogenesis; peptidoglycan biosynthesis. Functionally, cell wall formation. The chain is UDP-N-acetylenolpyruvoylglucosamine reductase from Shewanella baltica (strain OS195).